A 107-amino-acid chain; its full sequence is Ferredoxin (107 aa).

2 4Fe-4S ferredoxin-type domains span residues 2–30 and 31–60; these read TYVVTDECVKCKYTDCVEVCPVDCFYEGE and FMLVINPDECIDCGVCVPDCPIDAIKPETP. The [3Fe-4S] cluster site is built by C9 and C17. The [4Fe-4S] cluster site is built by C21, C40, C43, and C46. C50 lines the [3Fe-4S] cluster pocket.

Requires [4Fe-4S] cluster as cofactor. [3Fe-4S] cluster serves as cofactor.

Functionally, ferredoxins are iron-sulfur proteins that transfer electrons in a wide variety of metabolic reactions. The chain is Ferredoxin (fdxA) from Rickettsia bellii (strain RML369-C).